We begin with the raw amino-acid sequence, 266 residues long: Putative carbamate hydrolase RutD (266 aa).

This sequence belongs to the AB hydrolase superfamily. Hydrolase RutD family.

It catalyses the reaction carbamate + 2 H(+) = NH4(+) + CO2. In terms of biological role, involved in pyrimidine catabolism. May facilitate the hydrolysis of carbamate, a reaction that can also occur spontaneously. In Escherichia coli O111:H- (strain 11128 / EHEC), this protein is Putative carbamate hydrolase RutD.